A 114-amino-acid chain; its full sequence is Photosystem II reaction center Psb28 protein (114 aa).

The protein belongs to the Psb28 family. Part of the photosystem II complex.

It localises to the plastid. Its subcellular location is the chloroplast thylakoid membrane. In Gracilaria tenuistipitata var. liui (Red alga), this protein is Photosystem II reaction center Psb28 protein.